A 340-amino-acid chain; its full sequence is L-threonine 3-dehydrogenase (340 aa).

Residue Cys-38 participates in Zn(2+) binding. Residues Thr-40 and His-43 each act as charge relay system in the active site. 6 residues coordinate Zn(2+): His-63, Glu-64, Cys-93, Cys-96, Cys-99, and Cys-107. NAD(+) contacts are provided by residues Ile-175, Asp-195, Arg-200, 261 to 263 (LGI), and 285 to 286 (IY).

The protein belongs to the zinc-containing alcohol dehydrogenase family. Homotetramer. The cofactor is Zn(2+).

It is found in the cytoplasm. The enzyme catalyses L-threonine + NAD(+) = (2S)-2-amino-3-oxobutanoate + NADH + H(+). It functions in the pathway amino-acid degradation; L-threonine degradation via oxydo-reductase pathway; glycine from L-threonine: step 1/2. Catalyzes the NAD(+)-dependent oxidation of L-threonine to 2-amino-3-ketobutyrate. This is L-threonine 3-dehydrogenase from Stenotrophomonas maltophilia (strain K279a).